Consider the following 812-residue polypeptide: Plasminogen (812 aa).

Positions 1 to 19 are cleaved as a signal peptide; the sequence is MDHKEIILLFLLFLKPGQG. Positions 20–98 constitute a PAN domain; the sequence is DSLDGYVSTQ…RDVILFEKRV (79 aa). Intrachain disulfides connect Cys49-Cys73, Cys53-Cys61, Cys103-Cys181, Cys124-Cys164, Cys152-Cys176, Cys185-Cys262, Cys188-Cys316, Cys206-Cys245, Cys234-Cys257, Cys275-Cys352, Cys296-Cys335, Cys324-Cys347, Cys376-Cys454, Cys397-Cys437, Cys425-Cys449, Cys481-Cys560, Cys502-Cys543, Cys531-Cys555, Cys568-Cys687, Cys578-Cys586, and Cys609-Cys625. 5 Kringle domains span residues 102 to 181, 184 to 262, 274 to 352, 375 to 454, and 480 to 560; these read ECKT…IPEC, ECMY…IPRC, QCLK…IPSC, ECYQ…LKRC, and DCMY…IPLC. Residues 582–810 enclose the Peptidase S1 domain; the sequence is VVGGCVANPH…YVNWIEREMR (229 aa). Residue Ser598 is modified to Phosphoserine. Residues His624 and Asp667 each act as charge relay system in the active site. A Phosphoserine modification is found at Ser690. 3 disulfides stabilise this stretch: Cys701/Cys768, Cys731/Cys747, and Cys758/Cys786. The Charge relay system role is filled by Ser762.

The protein belongs to the peptidase S1 family. Plasminogen subfamily. As to quaternary structure, interacts (both mature PLG and the angiostatin peptide) with AMOT and CSPG4. Interacts (via the Kringle domains) with HRG; the interaction tethers PLG to the cell surface and enhances its activation. Interacts (via Kringle 4 domain) with ADA; the interaction stimulates PLG activation when in complex with DPP4. Angiostatin: Interacts with ATP5F1A; the interaction inhibits most of the angiogenic effects of angiostatin. In the presence of the inhibitor, the activation involves only cleavage after Arg-581, yielding two chains held together by two disulfide bonds. In the absence of the inhibitor, the activation involves additionally the removal of the activation peptide.

The protein localises to the secreted. The enzyme catalyses Preferential cleavage: Lys-|-Xaa &gt; Arg-|-Xaa, higher selectivity than trypsin. Converts fibrin into soluble products.. With respect to regulation, converted into plasmin by plasminogen activators, both plasminogen and its activator being bound to fibrin. Cannot be activated with streptokinase. Plasmin dissolves the fibrin of blood clots and acts as a proteolytic factor in a variety of other processes including embryonic development, tissue remodeling, tumor invasion, and inflammation. In ovulation, weakens the walls of the Graafian follicle. It activates the urokinase-type plasminogen activator, collagenases and several complement zymogens, such as C1, C4 and C5. Cleavage of fibronectin and laminin leads to cell detachment and apoptosis. Also cleaves fibrin, thrombospondin and von Willebrand factor. Its role in tissue remodeling and tumor invasion may be modulated by CSPG4. Binds to cells. In terms of biological role, angiostatin is an angiogenesis inhibitor that blocks neovascularization and growth of experimental primary and metastatic tumors in vivo. This Rattus norvegicus (Rat) protein is Plasminogen (Plg).